A 270-amino-acid chain; its full sequence is Phosphonoacetaldehyde hydrolase (270 aa).

The Nucleophile role is filled by Asp-11. Residues Asp-11 and Ala-13 each contribute to the Mg(2+) site. Lys-53 acts as the Schiff-base intermediate with substrate in catalysis. Asp-187 provides a ligand contact to Mg(2+).

This sequence belongs to the HAD-like hydrolase superfamily. PhnX family. As to quaternary structure, homodimer. Mg(2+) is required as a cofactor.

It carries out the reaction phosphonoacetaldehyde + H2O = acetaldehyde + phosphate + H(+). In terms of biological role, involved in phosphonate degradation. This is Phosphonoacetaldehyde hydrolase from Salmonella choleraesuis (strain SC-B67).